The sequence spans 337 residues: UDP-3-O-acylglucosamine N-acyltransferase (337 aa).

His238 functions as the Proton acceptor in the catalytic mechanism.

This sequence belongs to the transferase hexapeptide repeat family. LpxD subfamily. In terms of assembly, homotrimer.

It carries out the reaction a UDP-3-O-[(3R)-3-hydroxyacyl]-alpha-D-glucosamine + a (3R)-hydroxyacyl-[ACP] = a UDP-2-N,3-O-bis[(3R)-3-hydroxyacyl]-alpha-D-glucosamine + holo-[ACP] + H(+). It functions in the pathway bacterial outer membrane biogenesis; LPS lipid A biosynthesis. Functionally, catalyzes the N-acylation of UDP-3-O-acylglucosamine using 3-hydroxyacyl-ACP as the acyl donor. Is involved in the biosynthesis of lipid A, a phosphorylated glycolipid that anchors the lipopolysaccharide to the outer membrane of the cell. This Xanthomonas oryzae pv. oryzae (strain KACC10331 / KXO85) protein is UDP-3-O-acylglucosamine N-acyltransferase.